A 126-amino-acid polypeptide reads, in one-letter code: Protein ApaG (126 aa).

The region spanning 2 to 126 (SDTQHQVNVR…FRLAVPGALH (125 aa)) is the ApaG domain.

This chain is Protein ApaG, found in Pseudomonas aeruginosa (strain LESB58).